The primary structure comprises 390 residues: Methylthioribose-1-phosphate isomerase (390 aa).

Residues 53–55, Arg90, and Gln207 each bind substrate; that span reads RGA. Catalysis depends on Asp248, which acts as the Proton donor. 258 to 259 is a binding site for substrate; the sequence is NK.

The protein belongs to the EIF-2B alpha/beta/delta subunits family. MtnA subfamily.

It catalyses the reaction 5-(methylsulfanyl)-alpha-D-ribose 1-phosphate = 5-(methylsulfanyl)-D-ribulose 1-phosphate. It carries out the reaction 5-deoxy-alpha-D-ribose 1-phosphate = 5-deoxy-D-ribulose 1-phosphate. It participates in amino-acid biosynthesis; L-methionine biosynthesis via salvage pathway; L-methionine from S-methyl-5-thio-alpha-D-ribose 1-phosphate: step 1/6. Its function is as follows. Catalyzes the interconversion of methylthioribose-1-phosphate (MTR-1-P) into methylthioribulose-1-phosphate (MTRu-1-P). Also catalyzes the interconversion of 5-deoxyribose 1-phosphate and 5-deoxyribulose 1-phosphate. Part of a bifunctional DHAP-shunt salvage pathway for SAM by-products. In Rhodospirillum rubrum (strain ATCC 11170 / ATH 1.1.1 / DSM 467 / LMG 4362 / NCIMB 8255 / S1), this protein is Methylthioribose-1-phosphate isomerase.